A 373-amino-acid polypeptide reads, in one-letter code: Melanoma-associated antigen C2 (373 aa).

Positions 1-102 (MPPVPGVPFR…QGPSQSPLSS (102 aa)) are disordered. Over residues 40-60 (SSASSTLYLVFSPSSFSTSSS) the composition is skewed to low complexity. The span at 85 to 94 (SSPPQGPPQG) shows a compositional bias: pro residues. The interval 135–373 (SSFTYTLDEK…VMSSNVSFSE (239 aa)) is interaction with TRIM28. The region spanning 141-336 (LDEKVAELVE…SSFPSWYKDA (196 aa)) is the MAGE domain.

Interacts with TRIM28 and UBE2H. Not expressed in normal tissues, except in germ cells in the seminiferous tubules and in Purkinje cells of the cerebellum. Expressed in various tumors, including melanoma, lymphoma, as well as pancreatic cancer, mammary gland cancer, non-small cell lung cancer and liver cancer. In hepatocellular carcinoma, there is an inverse correlation between tumor differentiation and protein expression, i.e. the lower the differentiation, the higher percentage of expression.

Its subcellular location is the cytoplasm. The protein resides in the nucleus. Proposed to enhance ubiquitin ligase activity of RING-type zinc finger-containing E3 ubiquitin-protein ligases. In vitro enhances ubiquitin ligase activity of TRIM28 and stimulates p53/TP53 ubiquitination in presence of Ubl-conjugating enzyme UBE2H leading to p53/TP53 degradation. Proposed to act through recruitment and/or stabilization of the Ubl-conjugating enzymes (E2) at the E3:substrate complex. In Homo sapiens (Human), this protein is Melanoma-associated antigen C2 (MAGEC2).